The primary structure comprises 506 residues: Exoglucanase (506 aa).

An N-terminal signal peptide occupies residues 1 to 18 (MFPRSILLALSLTAVALG). The segment at 19 to 450 (QQVGTNMAEN…IKFGDINSTF (432 aa)) is catalytic. The active-site Nucleophile is Glu227. Glu232 serves as the catalytic Proton donor. Asn308 is a glycosylation site (N-linked (GlcNAc...) asparagine). The interval 405-426 (ASPSQPGISRGTCSRDSGKPED) is disordered. A compositionally biased stretch (polar residues) spans 406-419 (SPSQPGISRGTCSR). N-linked (GlcNAc...) asparagine glycosylation is present at Asn447. The interval 449-472 (TFNNNGGGGGNPSPTTTRPNSPAQ) is disordered. Positions 451–473 (NNNGGGGGNPSPTTTRPNSPAQT) are linker. Low complexity predominate over residues 460-470 (PSPTTTRPNSP). A CBM1 domain is found at 470-506 (PAQTMWGQCGGQGWTGPTACQSPSTCHVINDFYSQCF). Disulfide bonds link Cys478–Cys495 and Cys489–Cys505.

The protein belongs to the glycosyl hydrolase 7 (cellulase C) family.

It carries out the reaction Hydrolysis of (1-&gt;4)-beta-D-glucosidic linkages in cellulose and cellotetraose, releasing cellobiose from the non-reducing ends of the chains.. In terms of biological role, the biological conversion of cellulose to glucose generally requires three types of hydrolytic enzymes: (1) Endoglucanases which cut internal beta-1,4-glucosidic bonds; (2) Exocellobiohydrolases that cut the disaccharide cellobiose from the non-reducing end of the cellulose polymer chain; (3) Beta-1,4-glucosidases which hydrolyze the cellobiose and other short cello-oligosaccharides to glucose. This chain is Exoglucanase (cel2), found in Agaricus bisporus (White button mushroom).